Consider the following 219-residue polypeptide: ATP-dependent Clp protease proteolytic subunit 3 (219 aa).

Serine 112 serves as the catalytic Nucleophile. Residue histidine 137 is part of the active site.

Belongs to the peptidase S14 family. As to quaternary structure, fourteen ClpP subunits assemble into 2 heptameric rings which stack back to back to give a disk-like structure with a central cavity, resembling the structure of eukaryotic proteasomes.

It is found in the cytoplasm. It carries out the reaction Hydrolysis of proteins to small peptides in the presence of ATP and magnesium. alpha-casein is the usual test substrate. In the absence of ATP, only oligopeptides shorter than five residues are hydrolyzed (such as succinyl-Leu-Tyr-|-NHMec, and Leu-Tyr-Leu-|-Tyr-Trp, in which cleavage of the -Tyr-|-Leu- and -Tyr-|-Trp bonds also occurs).. Functionally, cleaves peptides in various proteins in a process that requires ATP hydrolysis. Has a chymotrypsin-like activity. Plays a major role in the degradation of misfolded proteins. The sequence is that of ATP-dependent Clp protease proteolytic subunit 3 from Streptomyces avermitilis (strain ATCC 31267 / DSM 46492 / JCM 5070 / NBRC 14893 / NCIMB 12804 / NRRL 8165 / MA-4680).